The chain runs to 283 residues: Pantothenate synthetase (283 aa).

Position 30–37 (30–37 (MGALHEGH)) interacts with ATP. Catalysis depends on His37, which acts as the Proton donor. A (R)-pantoate-binding site is contributed by Gln61. Beta-alanine is bound at residue Gln61. Position 147 to 150 (147 to 150 (GMKD)) interacts with ATP. Residue Gln153 coordinates (R)-pantoate. Residues Val176 and 184–187 (LSSR) each bind ATP.

This sequence belongs to the pantothenate synthetase family. As to quaternary structure, homodimer.

The protein resides in the cytoplasm. It catalyses the reaction (R)-pantoate + beta-alanine + ATP = (R)-pantothenate + AMP + diphosphate + H(+). It functions in the pathway cofactor biosynthesis; (R)-pantothenate biosynthesis; (R)-pantothenate from (R)-pantoate and beta-alanine: step 1/1. Catalyzes the condensation of pantoate with beta-alanine in an ATP-dependent reaction via a pantoyl-adenylate intermediate. The protein is Pantothenate synthetase of Endomicrobium trichonymphae.